The chain runs to 430 residues: Serine--tRNA ligase (430 aa).

An L-serine-binding site is contributed by 234–236 (TAE). Residue 265-267 (RRE) coordinates ATP. An L-serine-binding site is contributed by Glu288. 352-355 (EISS) is a binding site for ATP. Residue Ser388 participates in L-serine binding.

Belongs to the class-II aminoacyl-tRNA synthetase family. Type-1 seryl-tRNA synthetase subfamily. As to quaternary structure, homodimer. The tRNA molecule binds across the dimer.

The protein resides in the cytoplasm. It catalyses the reaction tRNA(Ser) + L-serine + ATP = L-seryl-tRNA(Ser) + AMP + diphosphate + H(+). The enzyme catalyses tRNA(Sec) + L-serine + ATP = L-seryl-tRNA(Sec) + AMP + diphosphate + H(+). Its pathway is aminoacyl-tRNA biosynthesis; selenocysteinyl-tRNA(Sec) biosynthesis; L-seryl-tRNA(Sec) from L-serine and tRNA(Sec): step 1/1. Catalyzes the attachment of serine to tRNA(Ser). Is also able to aminoacylate tRNA(Sec) with serine, to form the misacylated tRNA L-seryl-tRNA(Sec), which will be further converted into selenocysteinyl-tRNA(Sec). This chain is Serine--tRNA ligase, found in Thermosynechococcus vestitus (strain NIES-2133 / IAM M-273 / BP-1).